The following is a 95-amino-acid chain: uncharacterized protein (95 aa).

A run of 2 repeats spans residues 67–74 (GCGCGCGC) and 85–92 (CGGCCGCG). The interval 67 to 92 (GCGCGCGCATVAAVSPVPCGGCCGCG) is 2 X 8 AA approximate repeats.

This is an uncharacterized protein from Caenorhabditis elegans.